The primary structure comprises 849 residues: Formin-like protein 4 (849 aa).

The signal sequence occupies residues 1 to 22 (MPPTLALLLFLALSAVAAVGGA). Residues 36–104 (IEWTPPPSTA…RARGGGGGGT (69 aa)) form a disordered region. Positions 38–52 (WTPPPSTASPSPPSP) are enriched in pro residues. The segment covering 53 to 64 (DFSSDPSTPATP) has biased composition (low complexity). Residues 109-129 (IVVASAAAAAVLALLAFAAAF) form a helical membrane-spanning segment. A compositionally biased stretch (basic and acidic residues) spans 185–194 (ARRGMCRDVD). The tract at residues 185–364 (ARRGMCRDVD…PEPPTGPVSA (180 aa)) is disordered. Gly residues predominate over residues 234–246 (GSGGGGGGEGGGT). Residues 247–279 (WSEASASSPRTTTASRRSLPSLTSDFFPTTPAA) are compositionally biased toward low complexity. 3 stretches are compositionally biased toward pro residues: residues 280–297 (APVP…PPAP), 324–339 (PSNP…PPPS), and 346–360 (PKPP…PPTG). In terms of domain architecture, FH2 spans 406 to 823 (EAAGDEPRPK…SARSFRISAA (418 aa)).

This sequence belongs to the formin-like family. Class-I subfamily.

The protein localises to the membrane. This Oryza sativa subsp. japonica (Rice) protein is Formin-like protein 4 (FH4).